The chain runs to 261 residues: 4-hydroxy-tetrahydrodipicolinate reductase (261 aa).

Residues 11–16 (GFTGAM), 96–98 (GTT), and 122–125 (APNF) contribute to the NAD(+) site. The active-site Proton donor/acceptor is histidine 152. Histidine 153 is a (S)-2,3,4,5-tetrahydrodipicolinate binding site. The active-site Proton donor is the lysine 156. Residue 162–163 (GT) participates in (S)-2,3,4,5-tetrahydrodipicolinate binding.

Belongs to the DapB family.

Its subcellular location is the cytoplasm. It carries out the reaction (S)-2,3,4,5-tetrahydrodipicolinate + NAD(+) + H2O = (2S,4S)-4-hydroxy-2,3,4,5-tetrahydrodipicolinate + NADH + H(+). It catalyses the reaction (S)-2,3,4,5-tetrahydrodipicolinate + NADP(+) + H2O = (2S,4S)-4-hydroxy-2,3,4,5-tetrahydrodipicolinate + NADPH + H(+). It participates in amino-acid biosynthesis; L-lysine biosynthesis via DAP pathway; (S)-tetrahydrodipicolinate from L-aspartate: step 4/4. In terms of biological role, catalyzes the conversion of 4-hydroxy-tetrahydrodipicolinate (HTPA) to tetrahydrodipicolinate. The sequence is that of 4-hydroxy-tetrahydrodipicolinate reductase from Lactobacillus acidophilus (strain ATCC 700396 / NCK56 / N2 / NCFM).